Here is a 617-residue protein sequence, read N- to C-terminus: V-type proton ATPase catalytic subunit A (617 aa).

Thr-136 is subject to Phosphothreonine. ATP is bound at residue 250–257 (GAFGCGKT). The residue at position 384 (Ser-384) is a Phosphoserine; by AMPK.

The protein belongs to the ATPase alpha/beta chains family. V-ATPase is a heteromultimeric enzyme made up of two complexes: the ATP-hydrolytic V1 complex and the proton translocation V0 complex. The V1 complex consists of three catalytic AB heterodimers that form a heterohexamer, three peripheral stalks each consisting of EG heterodimers, one central rotor including subunits D and F, and the regulatory subunits C and H. The proton translocation complex V0 consists of the proton transport subunit a, a ring of proteolipid subunits c9c'', rotary subunit d, subunits e and f, and the accessory subunits ATP6AP1/Ac45 and ATP6AP2/PRR. Interacts with the V0 complex V-ATPase subunit a4 ATP6V0A4. Interacts with WFS1. Interacts with alpha-crystallin B chain/CRYAB and with MTOR, forming a ternary complex. Post-translationally, phosphorylation at Ser-384 by AMPK down-regulates its enzyme activity. In terms of tissue distribution, expressed in brain (at protein level).

The protein resides in the cytoplasm. It localises to the cytosol. Its subcellular location is the cytoplasmic vesicle. It is found in the secretory vesicle. The protein localises to the clathrin-coated vesicle membrane. The protein resides in the lysosome. It carries out the reaction ATP + H2O + 4 H(+)(in) = ADP + phosphate + 5 H(+)(out). ATP hydrolysis occurs at the interface between the nucleotide-binding domains of subunits A and B. ATP hydrolysis triggers a conformational change in the subunits D and F, which induces a shift of subunit d. The c-ring is subsequently rotated and results in a continuous proton translocation across the membrane. The V-ATPase is inhibited by bafilomycin A. In terms of biological role, catalytic subunit of the V1 complex of vacuolar(H+)-ATPase (V-ATPase), a multisubunit enzyme composed of a peripheral complex (V1) that hydrolyzes ATP and a membrane integral complex (V0) that translocates protons. V-ATPase is responsible for acidifying and maintaining the pH of intracellular compartments and in some cell types, is targeted to the plasma membrane, where it is responsible for acidifying the extracellular environment. In aerobic conditions, involved in intracellular iron homeostasis, thus triggering the activity of Fe(2+) prolyl hydroxylase (PHD) enzymes, and leading to HIF1A hydroxylation and subsequent proteasomal degradation. May play a role in neurite development and synaptic connectivity. This chain is V-type proton ATPase catalytic subunit A (ATP6V1A), found in Bos taurus (Bovine).